The following is a 396-amino-acid chain: Elongation factor Tu (396 aa).

The tr-type G domain maps to 11-205 (KPHVNIGTIG…VIDEYIPTPV (195 aa)). Residues 20–27 (GHVDHGKT) form a G1 region. 20–27 (GHVDHGKT) is a binding site for GTP. Position 27 (threonine 27) interacts with Mg(2+). Positions 61 to 65 (GITIN) are G2. Residues 82-85 (DAPG) form a G3 region. GTP is bound by residues 82 to 86 (DAPGH) and 137 to 140 (NKTD). The tract at residues 137–140 (NKTD) is G4. A G5 region spans residues 175-177 (SAL).

The protein belongs to the TRAFAC class translation factor GTPase superfamily. Classic translation factor GTPase family. EF-Tu/EF-1A subfamily. In terms of assembly, monomer.

The protein localises to the cytoplasm. The enzyme catalyses GTP + H2O = GDP + phosphate + H(+). In terms of biological role, GTP hydrolase that promotes the GTP-dependent binding of aminoacyl-tRNA to the A-site of ribosomes during protein biosynthesis. This chain is Elongation factor Tu, found in Oenococcus oeni (strain ATCC BAA-331 / PSU-1).